A 195-amino-acid chain; its full sequence is 4'-phosphopantetheinyl transferase AcpT (195 aa).

The protein belongs to the P-Pant transferase superfamily. Gsp/Sfp/HetI/AcpT family.

It catalyses the reaction apo-[ACP] + CoA = holo-[ACP] + adenosine 3',5'-bisphosphate + H(+). In terms of biological role, may be involved in an alternative pathway for phosphopantetheinyl transfer and holo-ACP synthesis in E.coli. The native apo-protein substrate is unknown. Is able to functionally replace AcpS in vivo but only when expressed at high levels. This chain is 4'-phosphopantetheinyl transferase AcpT, found in Escherichia coli (strain K12).